We begin with the raw amino-acid sequence, 100 residues long: Mitochondrial zinc maintenance protein 1, mitochondrial (100 aa).

Belongs to the complex I LYR family. MZM1 subfamily. In terms of assembly, interacts with RIP1.

The protein resides in the mitochondrion matrix. Its function is as follows. Assembly factor required for Rieske Fe-S protein RIP1 incorporation into the cytochrome b-c1 (CIII) complex. Functions as a chaperone, binding to this subunit within the mitochondrial matrix and stabilizing it prior to its translocation and insertion into the late CIII dimeric intermediate within the mitochondrial inner membrane. Modulates the mitochondrial matrix zinc pool. This is Mitochondrial zinc maintenance protein 1, mitochondrial (new18) from Schizosaccharomyces pombe (strain 972 / ATCC 24843) (Fission yeast).